A 195-amino-acid polypeptide reads, in one-letter code: Guanylate kinase (195 aa).

Positions 12 to 191 (GLIILISGPS…TIEDIKQLIL (180 aa)) constitute a Guanylate kinase-like domain. An ATP-binding site is contributed by 19–26 (GPSGVGKG).

Belongs to the guanylate kinase family.

Its subcellular location is the cytoplasm. It carries out the reaction GMP + ATP = GDP + ADP. Functionally, essential for recycling GMP and indirectly, cGMP. The protein is Guanylate kinase (gmk) of Mycoplasmoides gallisepticum (strain R(low / passage 15 / clone 2)) (Mycoplasma gallisepticum).